The chain runs to 544 residues: CTP synthase (544 aa).

The segment at 1 to 265 (MTKFIFVTGG…DNIITEQLQL (265 aa)) is amidoligase domain. Residue Ser13 coordinates CTP. Ser13 lines the UTP pocket. Residues 14-19 (SLGKGI) and Asp71 each bind ATP. Asp71 and Glu139 together coordinate Mg(2+). CTP is bound by residues 146–148 (DIE), 186–191 (KTKPTQ), and Lys222. UTP contacts are provided by residues 186–191 (KTKPTQ) and Lys222. The Glutamine amidotransferase type-1 domain maps to 290–544 (KIAMVGKYVD…VKAALNNKKA (255 aa)). Residue Gly353 coordinates L-glutamine. Cys380 (nucleophile; for glutamine hydrolysis) is an active-site residue. L-glutamine-binding positions include 381–384 (LGMQ), Glu404, and Arg471. Active-site residues include His517 and Glu519.

Belongs to the CTP synthase family. In terms of assembly, homotetramer.

The catalysed reaction is UTP + L-glutamine + ATP + H2O = CTP + L-glutamate + ADP + phosphate + 2 H(+). The enzyme catalyses L-glutamine + H2O = L-glutamate + NH4(+). It carries out the reaction UTP + NH4(+) + ATP = CTP + ADP + phosphate + 2 H(+). It participates in pyrimidine metabolism; CTP biosynthesis via de novo pathway; CTP from UDP: step 2/2. Its activity is regulated as follows. Allosterically activated by GTP, when glutamine is the substrate; GTP has no effect on the reaction when ammonia is the substrate. The allosteric effector GTP functions by stabilizing the protein conformation that binds the tetrahedral intermediate(s) formed during glutamine hydrolysis. Inhibited by the product CTP, via allosteric rather than competitive inhibition. Functionally, catalyzes the ATP-dependent amination of UTP to CTP with either L-glutamine or ammonia as the source of nitrogen. Regulates intracellular CTP levels through interactions with the four ribonucleotide triphosphates. This Neisseria meningitidis serogroup B (strain ATCC BAA-335 / MC58) protein is CTP synthase.